The following is a 366-amino-acid chain: Anhydro-N-acetylmuramic acid kinase (366 aa).

Residue 15–22 participates in ATP binding; that stretch reads GTSLDGVD.

The protein belongs to the anhydro-N-acetylmuramic acid kinase family.

The enzyme catalyses 1,6-anhydro-N-acetyl-beta-muramate + ATP + H2O = N-acetyl-D-muramate 6-phosphate + ADP + H(+). It functions in the pathway amino-sugar metabolism; 1,6-anhydro-N-acetylmuramate degradation. The protein operates within cell wall biogenesis; peptidoglycan recycling. In terms of biological role, catalyzes the specific phosphorylation of 1,6-anhydro-N-acetylmuramic acid (anhMurNAc) with the simultaneous cleavage of the 1,6-anhydro ring, generating MurNAc-6-P. Is required for the utilization of anhMurNAc either imported from the medium or derived from its own cell wall murein, and thus plays a role in cell wall recycling. This is Anhydro-N-acetylmuramic acid kinase from Hydrogenovibrio crunogenus (strain DSM 25203 / XCL-2) (Thiomicrospira crunogena).